The primary structure comprises 668 residues: MGKVLVTTALAYTNGPLHIGHVRSTYLPADVYTRFLKMRGIDAIHIGGTDNHGVPIALQAELEGKDPEEIVEKYHEMIKEDLERLNIHFDEFSCTCREFNPDHVDMTQWFFKRLYEAGYIEEREVEQLYCPECERPLPDRYVEGVCPYCGAEGARGDHCEACGRYLEPVQLEEPRCVICGSKPEVRRTMHLFFKLSEFEEDLKKWLESNDNLPKNVRNYAIQWVREGLKDWDIVRDLDWGVPVPLEGYEDKVFYVWFDAPIGYVTFTKQYCDRVGQDWKDYWFSEDTKIVHFIGKDIIVHHALFWPAMLMGVGATLPYTIVAGEYLTLEGEKMSTSRGWVVWVKDFTKLFPADLLRYYLIVVSPLTRDADFSWGDFRDRVNNELVANLGNFVYRTLSFIYRFLDGNVPEAETDQEIVDKIKETHQRVTEHLEKFRFREALTEVLRLSKFGNEYFQEHEPWKLKDEDPERCAEVLRGCARIVKALAVMLAPFLPDSAEKIWQSLGYEDSVHDVDWEEALEDVETKEIPEPEPIFPKVTEEDLEKAKALLPEESGESEGQDDEYVSLEEFNRLDLRVGKIKEAERVEGSDRLIKLRIDIGDRTVTAVAGLYPTYEPEELVGRKVVVLANIQPKEMFGVRSEAMILAVGDEPALLTIDESKREVEPGERIR.

A 'HIGH' region motif is present at residues 11–21 (AYTNGPLHIGH). Zn(2+) is bound by residues cysteine 146, cysteine 149, cysteine 159, and cysteine 162. Residues 332–336 (KMSTS) carry the 'KMSKS' region motif. An ATP-binding site is contributed by threonine 335. The tRNA-binding domain maps to 567 to 668 (EFNRLDLRVG…REVEPGERIR (102 aa)).

Belongs to the class-I aminoacyl-tRNA synthetase family. MetG type 1 subfamily. In terms of assembly, homodimer. Zn(2+) serves as cofactor.

Its subcellular location is the cytoplasm. It carries out the reaction tRNA(Met) + L-methionine + ATP = L-methionyl-tRNA(Met) + AMP + diphosphate. Its function is as follows. Is required not only for elongation of protein synthesis but also for the initiation of all mRNA translation through initiator tRNA(fMet) aminoacylation. This is Methionine--tRNA ligase from Methanopyrus kandleri (strain AV19 / DSM 6324 / JCM 9639 / NBRC 100938).